Here is a 426-residue protein sequence, read N- to C-terminus: 5-hydroxybenzimidazole synthase BzaB (426 aa).

Substrate is bound by residues M95, Y124, H163, 185–187 (SRG), 226–229 (DAIR), and E265. Residue H269 coordinates Zn(2+). F292 contacts substrate. H333 provides a ligand contact to Zn(2+). Positions 407, 410, and 414 each coordinate [4Fe-4S] cluster.

It belongs to the ThiC family. 5-hydroxybenzimidazole synthase subfamily. [4Fe-4S] cluster serves as cofactor.

It carries out the reaction 5-amino-1-(5-phospho-beta-D-ribosyl)imidazole + AH2 + S-adenosyl-L-methionine = 5-hydroxybenzimidazole + 5'-deoxyadenosine + formate + L-methionine + A + NH4(+) + phosphate + 2 H(+). Functionally, together with BzaA, probably catalyzes the conversion of aminoimidazole ribotide (AIR) to 5-hydroxybenzimidazole (5-HBI) in a radical S-adenosyl-L-methionine (SAM)-dependent reaction. Is thus involved in the anaerobic biosynthesis of the benzimidazole lower axial ligand of the cobamide produced by M.thermoacetica. Requires BzaA for catalytic activity, as BzaB alone displays no activity. The protein is 5-hydroxybenzimidazole synthase BzaB of Moorella thermoacetica (strain ATCC 39073 / JCM 9320).